Reading from the N-terminus, the 370-residue chain is 2-oxoisovalerate dehydrogenase subunit beta, mitochondrial (370 aa).

Residues 1-25 (MLRGNNIKKVNSLLVRSFHSTVGNR) constitute a mitochondrion transit peptide. Tyr-130 provides a ligand contact to thiamine diphosphate. K(+) contacts are provided by Gly-156, Leu-158, Thr-159, and Glu-209.

Heterotetramer of 2 alpha and 2 beta chains. The cofactor is thiamine diphosphate.

It localises to the mitochondrion matrix. The catalysed reaction is N(6)-[(R)-lipoyl]-L-lysyl-[protein] + 3-methyl-2-oxobutanoate + H(+) = N(6)-[(R)-S(8)-2-methylpropanoyldihydrolipoyl]-L-lysyl-[protein] + CO2. In terms of biological role, the branched-chain alpha-keto dehydrogenase complex catalyzes the overall conversion of alpha-keto acids to acyl-CoA and CO(2). It contains multiple copies of three enzymatic components: branched-chain alpha-keto acid decarboxylase (E1), lipoamide acyltransferase (E2) and lipoamide dehydrogenase (E3). This is 2-oxoisovalerate dehydrogenase subunit beta, mitochondrial (bkdB) from Dictyostelium discoideum (Social amoeba).